Reading from the N-terminus, the 356-residue chain is Holliday junction branch migration complex subunit RuvB (356 aa).

Residues 4–191 (TDKLATEQRI…FGIVARLEFY (188 aa)) are large ATPase domain (RuvB-L). Residues Leu30, Arg31, Gly72, Lys75, Thr76, Thr77, 138-140 (EDY), Arg181, Tyr191, and Arg228 each bind ATP. Mg(2+) is bound at residue Thr76. The small ATPAse domain (RuvB-S) stretch occupies residues 192-262 (DAEQLSRIVR…VADAALAMLD (71 aa)). The tract at residues 265 to 356 (PVGFDLMDRK…RDEWDTPDGK (92 aa)) is head domain (RuvB-H). Arg301, Arg320, and Arg325 together coordinate DNA.

The protein belongs to the RuvB family. In terms of assembly, homohexamer. Forms an RuvA(8)-RuvB(12)-Holliday junction (HJ) complex. HJ DNA is sandwiched between 2 RuvA tetramers; dsDNA enters through RuvA and exits via RuvB. An RuvB hexamer assembles on each DNA strand where it exits the tetramer. Each RuvB hexamer is contacted by two RuvA subunits (via domain III) on 2 adjacent RuvB subunits; this complex drives branch migration. In the full resolvosome a probable DNA-RuvA(4)-RuvB(12)-RuvC(2) complex forms which resolves the HJ.

The protein resides in the cytoplasm. It catalyses the reaction ATP + H2O = ADP + phosphate + H(+). Functionally, the RuvA-RuvB-RuvC complex processes Holliday junction (HJ) DNA during genetic recombination and DNA repair, while the RuvA-RuvB complex plays an important role in the rescue of blocked DNA replication forks via replication fork reversal (RFR). RuvA specifically binds to HJ cruciform DNA, conferring on it an open structure. The RuvB hexamer acts as an ATP-dependent pump, pulling dsDNA into and through the RuvAB complex. RuvB forms 2 homohexamers on either side of HJ DNA bound by 1 or 2 RuvA tetramers; 4 subunits per hexamer contact DNA at a time. Coordinated motions by a converter formed by DNA-disengaged RuvB subunits stimulates ATP hydrolysis and nucleotide exchange. Immobilization of the converter enables RuvB to convert the ATP-contained energy into a lever motion, pulling 2 nucleotides of DNA out of the RuvA tetramer per ATP hydrolyzed, thus driving DNA branch migration. The RuvB motors rotate together with the DNA substrate, which together with the progressing nucleotide cycle form the mechanistic basis for DNA recombination by continuous HJ branch migration. Branch migration allows RuvC to scan DNA until it finds its consensus sequence, where it cleaves and resolves cruciform DNA. The sequence is that of Holliday junction branch migration complex subunit RuvB from Burkholderia cenocepacia (strain HI2424).